A 254-amino-acid chain; its full sequence is Insulin-like growth factor-binding protein 4 (254 aa).

The signal sequence occupies residues 1 to 21 (MLPFGLVAALLLAAGPRPSLG). Residues 23–103 (EAIHCPPCSE…MHGQGVCTEL (81 aa)) form the IGFBP N-terminal domain. 6 disulfides stabilise this stretch: Cys-27–Cys-53, Cys-30–Cys-55, Cys-38–Cys-56, Cys-44–Cys-59, Cys-67–Cys-80, and Cys-74–Cys-100. An N-linked (GlcNAc...) asparagine glycan is attached at Asn-125. Cys-131 and Cys-138 are joined by a disulfide. Residues 149–169 (RSKMKVVGTPREEPRPVPQGS) are disordered. The Thyroglobulin type-1 domain maps to 167–245 (QGSCQSELHR…GLEPKGELDC (79 aa)). Intrachain disulfides connect Cys-170–Cys-200, Cys-211–Cys-222, and Cys-224–Cys-245. The residue at position 251 (Ser-251) is a Phosphoserine.

Binds IGF2 more than IGF1.

It localises to the secreted. In terms of biological role, IGF-binding proteins prolong the half-life of the IGFs and have been shown to either inhibit or stimulate the growth promoting effects of the IGFs on cell culture. They alter the interaction of IGFs with their cell surface receptors. This chain is Insulin-like growth factor-binding protein 4 (Igfbp4), found in Rattus norvegicus (Rat).